A 264-amino-acid chain; its full sequence is Nicotinamide N-methyltransferase (264 aa).

At R18 the chain carries Citrulline; alternate. Residues Y20 and Y25 each coordinate S-adenosyl-L-methionine. K39 bears the N6-acetyllysine mark. S-adenosyl-L-methionine is bound by residues G63, Y69, D85, and N90. Residue R132 is modified to Citrulline; alternate. S-adenosyl-L-methionine is bound by residues 142 to 143 (DV) and T163. R181 bears the Citrulline; alternate mark. Nicotinamide-binding residues include D197 and S213.

Belongs to the class I-like SAM-binding methyltransferase superfamily. NNMT/PNMT/TEMT family. As to quaternary structure, monomer. In terms of processing, deiminated by PADI1 and PADI2. As to expression, predominantly expressed in the liver. A lower expression is seen in the kidney, lung, skeletal muscle, placenta and heart. Not detected in the brain or pancreas.

It is found in the cytoplasm. It carries out the reaction nicotinamide + S-adenosyl-L-methionine = 1-methylnicotinamide + S-adenosyl-L-homocysteine. The protein operates within cofactor metabolism. Its pathway is amino-acid degradation. Its activity is regulated as follows. Inactivated by deimination on Arg-132. Catalyzes the N-methylation of nicotinamide using the universal methyl donor S-adenosyl-L-methionine to form N1-methylnicotinamide and S-adenosyl-L-homocysteine, a predominant nicotinamide/vitamin B3 clearance pathway. Plays a central role in regulating cellular methylation potential, by consuming S-adenosyl-L-methionine and limiting its availability for other methyltransferases. Actively mediates genome-wide epigenetic and transcriptional changes through hypomethylation of repressive chromatin marks, such as H3K27me3. In a developmental context, contributes to low levels of the repressive histone marks that characterize pluripotent embryonic stem cell pre-implantation state. Acts as a metabolic regulator primarily on white adipose tissue energy expenditure as well as hepatic gluconeogenesis and cholesterol biosynthesis. In white adipocytes, regulates polyamine flux by consuming S-adenosyl-L-methionine which provides for propylamine group in polyamine biosynthesis, whereas by consuming nicotinamide controls NAD(+) levels through the salvage pathway. Via its product N1-methylnicotinamide regulates protein acetylation in hepatocytes, by repressing the ubiquitination and increasing the stability of SIRT1 deacetylase. Can also N-methylate other pyridines structurally related to nicotinamide and play a role in xenobiotic detoxification. This is Nicotinamide N-methyltransferase from Homo sapiens (Human).